A 275-amino-acid polypeptide reads, in one-letter code: Formamidopyrimidine-DNA glycosylase (275 aa).

Pro-2 acts as the Schiff-base intermediate with DNA in catalysis. Glu-3 (proton donor) is an active-site residue. Lys-59 acts as the Proton donor; for beta-elimination activity in catalysis. 2 residues coordinate DNA: His-94 and Arg-113. Residues 241 to 275 (LVHTHAKEPCQICGTIIQKTKVNGRGTYYCPNCQN) form an FPG-type zinc finger. Residue Arg-265 is the Proton donor; for delta-elimination activity of the active site.

This sequence belongs to the FPG family. In terms of assembly, monomer. It depends on Zn(2+) as a cofactor.

The enzyme catalyses Hydrolysis of DNA containing ring-opened 7-methylguanine residues, releasing 2,6-diamino-4-hydroxy-5-(N-methyl)formamidopyrimidine.. It carries out the reaction 2'-deoxyribonucleotide-(2'-deoxyribose 5'-phosphate)-2'-deoxyribonucleotide-DNA = a 3'-end 2'-deoxyribonucleotide-(2,3-dehydro-2,3-deoxyribose 5'-phosphate)-DNA + a 5'-end 5'-phospho-2'-deoxyribonucleoside-DNA + H(+). Its function is as follows. Involved in base excision repair of DNA damaged by oxidation or by mutagenic agents. Acts as a DNA glycosylase that recognizes and removes damaged bases. Has a preference for oxidized purines, such as 7,8-dihydro-8-oxoguanine (8-oxoG). Has AP (apurinic/apyrimidinic) lyase activity and introduces nicks in the DNA strand. Cleaves the DNA backbone by beta-delta elimination to generate a single-strand break at the site of the removed base with both 3'- and 5'-phosphates. This Ureaplasma parvum serovar 3 (strain ATCC 700970) protein is Formamidopyrimidine-DNA glycosylase.